The following is a 646-amino-acid chain: Threonine--tRNA ligase (646 aa).

A TGS domain is found at 1-61 (MIKITFPDGS…NEDANFVLYK (61 aa)). Positions 242–541 (DHRKIGKEMD…LIEHTAGKFP (300 aa)) are catalytic. Positions 337, 388, and 518 each coordinate Zn(2+).

The protein belongs to the class-II aminoacyl-tRNA synthetase family. Homodimer. Zn(2+) is required as a cofactor.

It localises to the cytoplasm. It catalyses the reaction tRNA(Thr) + L-threonine + ATP = L-threonyl-tRNA(Thr) + AMP + diphosphate + H(+). In terms of biological role, catalyzes the attachment of threonine to tRNA(Thr) in a two-step reaction: L-threonine is first activated by ATP to form Thr-AMP and then transferred to the acceptor end of tRNA(Thr). Also edits incorrectly charged L-seryl-tRNA(Thr). The protein is Threonine--tRNA ligase of Phocaeicola vulgatus (strain ATCC 8482 / DSM 1447 / JCM 5826 / CCUG 4940 / NBRC 14291 / NCTC 11154) (Bacteroides vulgatus).